The chain runs to 170 residues: Thialysine N-epsilon-acetyltransferase (170 aa).

One can recognise an N-acetyltransferase domain in the interval 4–166 (TRIREARESD…FRFEGEAMRE (163 aa)). Substrate is bound at residue 27–28 (FE). N6-acetyllysine is present on K29. E92 provides a ligand contact to substrate. Acetyl-CoA contacts are provided by residues 94 to 96 (IYV), 102 to 107 (GQGIGT), 133 to 135 (NKK), and Y140. Y140 serves as the catalytic Proton donor. E152 lines the substrate pocket.

It belongs to the acetyltransferase family. As to quaternary structure, homodimer.

The protein resides in the cytoplasm. The enzyme catalyses S-(2-aminoethyl)-L-cysteine + acetyl-CoA = S-(2-acetamidoethyl)-L-cysteine + CoA + H(+). It carries out the reaction an alkane-alpha,omega-diamine + acetyl-CoA = an N-acetylalkane-alpha,omega-diamine + CoA + H(+). Its function is as follows. Catalyzes the N-acetylation of the amino acid thialysine (S-(2-aminoethyl)-L-cysteine), a L-lysine analog with the 4-methylene group substituted with a sulfur. May also catalyze acetylation of polyamines, such as norspermidine, spermidine or spermine. However, ability to acetylate polyamines is weak, suggesting that it does not act as a diamine acetyltransferase in vivo. This chain is Thialysine N-epsilon-acetyltransferase, found in Mus musculus (Mouse).